The primary structure comprises 104 residues: uncharacterized protein (104 aa).

Disordered stretches follow at residues 1-48 (MLRR…NNQP) and 66-104 (QENT…RRCS).

This is an uncharacterized protein from Saccharomyces cerevisiae (strain ATCC 204508 / S288c) (Baker's yeast).